Reading from the N-terminus, the 274-residue chain is Acetyl-coenzyme A carboxylase carboxyl transferase subunit alpha (274 aa).

Positions 2 to 250 (NKEFIKSIVV…KKELMNAMNE (249 aa)) constitute a CoA carboxyltransferase C-terminal domain.

It belongs to the AccA family. As to quaternary structure, acetyl-CoA carboxylase is a heterohexamer composed of biotin carboxyl carrier protein (AccB), biotin carboxylase (AccC) and two subunits each of ACCase subunit alpha (AccA) and ACCase subunit beta (AccD).

It localises to the cytoplasm. It catalyses the reaction N(6)-carboxybiotinyl-L-lysyl-[protein] + acetyl-CoA = N(6)-biotinyl-L-lysyl-[protein] + malonyl-CoA. Its pathway is lipid metabolism; malonyl-CoA biosynthesis; malonyl-CoA from acetyl-CoA: step 1/1. Component of the acetyl coenzyme A carboxylase (ACC) complex. First, biotin carboxylase catalyzes the carboxylation of biotin on its carrier protein (BCCP) and then the CO(2) group is transferred by the carboxyltransferase to acetyl-CoA to form malonyl-CoA. The chain is Acetyl-coenzyme A carboxylase carboxyl transferase subunit alpha from Clostridium botulinum (strain Eklund 17B / Type B).